A 404-amino-acid polypeptide reads, in one-letter code: Serine/threonine transporter SstT (404 aa).

Transmembrane regions (helical) follow at residues 17–37 (IGIG…LTGF), 39–59 (ILGK…VFAL), 75–95 (MTLI…VAVL), 138–158 (ALAT…GLAL), 179–199 (IVVW…FTTI), 212–232 (FLIL…NPLI), 287–307 (IPLG…VLTL), and 313–333 (FGIP…AVSA).

Belongs to the dicarboxylate/amino acid:cation symporter (DAACS) (TC 2.A.23) family.

Its subcellular location is the cell membrane. The catalysed reaction is L-serine(in) + Na(+)(in) = L-serine(out) + Na(+)(out). The enzyme catalyses L-threonine(in) + Na(+)(in) = L-threonine(out) + Na(+)(out). In terms of biological role, involved in the import of serine and threonine into the cell, with the concomitant import of sodium (symport system). The protein is Serine/threonine transporter SstT of Streptococcus pyogenes serotype M2 (strain MGAS10270).